The primary structure comprises 508 residues: Mevalonate kinase ERG12 (508 aa).

The disordered stretch occupies residues 1-46 (MPPSNPAMVNGLNGSHANGNGNGHNHISDSGSETSGESSNGSGRRR). The segment covering 10–42 (NGLNGSHANGNGNGHNHISDSGSETSGESSNGS) has biased composition (low complexity). Residues Lys68, Ser200, and 205-211 (GAGLGSS) each bind ATP. 2 residues coordinate Mg(2+): Ser211 and Glu256. Asp267 acts as the Proton acceptor in catalysis.

Belongs to the GHMP kinase family. Mevalonate kinase subfamily. Homodimer. The cofactor is Mg(2+).

It localises to the cytoplasm. The protein localises to the cytosol. The catalysed reaction is (R)-mevalonate + ATP = (R)-5-phosphomevalonate + ADP + H(+). It functions in the pathway isoprenoid biosynthesis; isopentenyl diphosphate biosynthesis via mevalonate pathway; isopentenyl diphosphate from (R)-mevalonate: step 1/3. Functionally, mevalonate kinase; part of the second module of ergosterol biosynthesis pathway that includes the middle steps of the pathway. ERG12 converts mevalonate into 5-phosphomevalonate. The second module is carried out in the vacuole and involves the formation of farnesyl diphosphate, which is also an important intermediate in the biosynthesis of ubiquinone, dolichol, heme and prenylated proteins. Activity by the mevalonate kinase ERG12 (FG05912) first converts mevalonate into 5-phosphomevalonate. 5-phosphomevalonate is then further converted to 5-diphosphomevalonate by the phosphomevalonate kinase ERG8 (FG09764). The diphosphomevalonate decarboxylase ERG19 (FG10424) then produces isopentenyl diphosphate. The isopentenyl-diphosphate delta-isomerase IDI1 (FG09722) then catalyzes the 1,3-allylic rearrangement of the homoallylic substrate isopentenyl (IPP) to its highly electrophilic allylic isomer, dimethylallyl diphosphate (DMAPP). Finally the farnesyl diphosphate synthase ERG20 (FG06784) catalyzes the sequential condensation of isopentenyl pyrophosphate with dimethylallyl pyrophosphate, and then with the resultant geranylpyrophosphate to the ultimate product farnesyl pyrophosphate. The sequence is that of Mevalonate kinase ERG12 from Gibberella zeae (strain ATCC MYA-4620 / CBS 123657 / FGSC 9075 / NRRL 31084 / PH-1) (Wheat head blight fungus).